The sequence spans 223 residues: MGQKVNPNGFRVGVIRDWQAKWYADKDFSKFLAEDIKIREFIAKQLTDASVSTVEIERAANRVNISIHTAKPGMVIGKGGSEVEKLRNQLNQLTGKRVHINIVEIKKPDLEAKLVGENIAAQLEGRVAFRRAMKQAMQRSMRSGAKGIKTQVAGRLNGADMSRVERYSEGKVPLHTLRADVDYAWVEARTTYGQLGVKTWIYRGEILPEVKDAKKNSKEQGGK.

A KH type-2 domain is found at 38 to 106; sequence IREFIAKQLT…RVHINIVEIK (69 aa).

This sequence belongs to the universal ribosomal protein uS3 family. As to quaternary structure, part of the 30S ribosomal subunit. Forms a tight complex with proteins S10 and S14.

Its function is as follows. Binds the lower part of the 30S subunit head. Binds mRNA in the 70S ribosome, positioning it for translation. In Pediococcus pentosaceus (strain ATCC 25745 / CCUG 21536 / LMG 10740 / 183-1w), this protein is Small ribosomal subunit protein uS3.